The sequence spans 675 residues: MNTVSSSDQARVQELRQLLQKASYAYYGLDAPLMEDAVYDQLYHELVDLEAQYPQLITPDSPTQRVGERPATQFVSVQHRIPLYSLENAFDRGDMDTWDERWHKLVPNLSQEPGYVTELKIDGSALALTYENGLLVRGTTRGDGTKGEEITQNVRTIRSIPLRLNIEHPPEWLEVRGEAFLGLQVFDQINRDRIQAGEAEFANPRNAAAGTLRQLDSKVVAERKLDFFAYTIHISGPTDDLALPQTQWQALETLKQLGFRVNPNRRQCESLAEVQTYYDDWSLKRLDLPYLTDGVVIKLDNLGVQDELGFTQKFPRWAIAWKYPPEEAATRIEQITVNVGRTGALTPVAEFKPVQLAGTTVSRATLHNRDRISELDIHIGDTVVVRKAGEIIPEVLRVLPELRPAGAQPYQMPTACPSCGQPAVQLETEAVTRCVNASCPAILRGSLIHWVSRGALDIDGLGEKIVGQLTDSQMVQSVADLYELNEDKLMDLDRMGTKLARKIVSAIATSKQQPWHRVLYGLGIRHVGSVNAQLLTENYPTVDALMAVDGDKIATIHGIGPEIAQSVYEWFQTPTNQTLIQRLQSAGLQFEAIVSESTQPQTLSGKTFVITGTLPTLKRDQAKQMIQDAGGKVTGSVSKNTSYVVVGADAGSKLTKAQSLGINQLSEADLLALLQ.

NAD(+)-binding positions include 36–40 (DAVYD), 85–86 (SL), and Glu-118. The N6-AMP-lysine intermediate role is filled by Lys-120. Residues Arg-141, Glu-178, Lys-298, and Lys-322 each contribute to the NAD(+) site. Zn(2+) is bound by residues Cys-416, Cys-419, Cys-434, and Cys-439. A BRCT domain is found at 598-675 (TQPQTLSGKT…SEADLLALLQ (78 aa)).

Belongs to the NAD-dependent DNA ligase family. LigA subfamily. Mg(2+) is required as a cofactor. It depends on Mn(2+) as a cofactor.

It catalyses the reaction NAD(+) + (deoxyribonucleotide)n-3'-hydroxyl + 5'-phospho-(deoxyribonucleotide)m = (deoxyribonucleotide)n+m + AMP + beta-nicotinamide D-nucleotide.. Functionally, DNA ligase that catalyzes the formation of phosphodiester linkages between 5'-phosphoryl and 3'-hydroxyl groups in double-stranded DNA using NAD as a coenzyme and as the energy source for the reaction. It is essential for DNA replication and repair of damaged DNA. The polypeptide is DNA ligase (Acaryochloris marina (strain MBIC 11017)).